The primary structure comprises 854 residues: DNA mismatch repair protein MutS (854 aa).

615-622 (GPNMGGKS) serves as a coordination point for ATP.

The protein belongs to the DNA mismatch repair MutS family.

This protein is involved in the repair of mismatches in DNA. It is possible that it carries out the mismatch recognition step. This protein has a weak ATPase activity. The polypeptide is DNA mismatch repair protein MutS (Aliivibrio fischeri (strain ATCC 700601 / ES114) (Vibrio fischeri)).